Reading from the N-terminus, the 255-residue chain is Carboxy-S-adenosyl-L-methionine synthase (255 aa).

S-adenosyl-L-methionine-binding positions include tyrosine 45, 70–72 (GCS), 124–125 (DI), and asparagine 139.

Belongs to the class I-like SAM-binding methyltransferase superfamily. Cx-SAM synthase family. As to quaternary structure, homodimer.

It carries out the reaction prephenate + S-adenosyl-L-methionine = carboxy-S-adenosyl-L-methionine + 3-phenylpyruvate + H2O. In terms of biological role, catalyzes the conversion of S-adenosyl-L-methionine (SAM) to carboxy-S-adenosyl-L-methionine (Cx-SAM). The chain is Carboxy-S-adenosyl-L-methionine synthase from Hamiltonella defensa subsp. Acyrthosiphon pisum (strain 5AT).